The primary structure comprises 185 residues: Peptidyl-tRNA hydrolase (185 aa).

Tyr14 provides a ligand contact to tRNA. The Proton acceptor role is filled by His19. The tRNA site is built by Tyr64, Asn66, and Asn112.

It belongs to the PTH family. Monomer.

It localises to the cytoplasm. It catalyses the reaction an N-acyl-L-alpha-aminoacyl-tRNA + H2O = an N-acyl-L-amino acid + a tRNA + H(+). Hydrolyzes ribosome-free peptidyl-tRNAs (with 1 or more amino acids incorporated), which drop off the ribosome during protein synthesis, or as a result of ribosome stalling. Functionally, catalyzes the release of premature peptidyl moieties from peptidyl-tRNA molecules trapped in stalled 50S ribosomal subunits, and thus maintains levels of free tRNAs and 50S ribosomes. The polypeptide is Peptidyl-tRNA hydrolase (Shouchella clausii (strain KSM-K16) (Alkalihalobacillus clausii)).